Reading from the N-terminus, the 350-residue chain is uncharacterized protein (350 aa).

This is an uncharacterized protein from Sulfolobus islandicus filamentous virus (isolate Iceland/Hveragerdi) (SIFV).